A 271-amino-acid chain; its full sequence is Tryptophan synthase alpha chain (271 aa).

Residues Glu-49 and Asp-60 each act as proton acceptor in the active site.

This sequence belongs to the TrpA family. As to quaternary structure, tetramer of two alpha and two beta chains.

The catalysed reaction is (1S,2R)-1-C-(indol-3-yl)glycerol 3-phosphate + L-serine = D-glyceraldehyde 3-phosphate + L-tryptophan + H2O. It participates in amino-acid biosynthesis; L-tryptophan biosynthesis; L-tryptophan from chorismate: step 5/5. In terms of biological role, the alpha subunit is responsible for the aldol cleavage of indoleglycerol phosphate to indole and glyceraldehyde 3-phosphate. In Burkholderia cenocepacia (strain ATCC BAA-245 / DSM 16553 / LMG 16656 / NCTC 13227 / J2315 / CF5610) (Burkholderia cepacia (strain J2315)), this protein is Tryptophan synthase alpha chain.